Consider the following 309-residue polypeptide: Protease HtpX homolog (309 aa).

2 helical membrane passes run 7–27 (TTVL…MLGG) and 29–49 (QGMM…YWYS). His131 is a Zn(2+) binding site. Glu132 is an active-site residue. His135 provides a ligand contact to Zn(2+). Transmembrane regions (helical) follow at residues 141–161 (ILIG…ASMA) and 182–202 (IGLI…QMAI). Glu207 provides a ligand contact to Zn(2+). A disordered region spans residues 278-309 (RHGSDSGTGNRDSSIRRRNMNTEAKAAWDRLR).

It belongs to the peptidase M48B family. Requires Zn(2+) as cofactor.

It is found in the cell inner membrane. This chain is Protease HtpX homolog, found in Desulforapulum autotrophicum (strain ATCC 43914 / DSM 3382 / VKM B-1955 / HRM2) (Desulfobacterium autotrophicum).